A 210-amino-acid polypeptide reads, in one-letter code: 3-demethoxyubiquinol 3-hydroxylase (210 aa).

Residues E59, E89, H92, E141, E173, and H176 each contribute to the Fe cation site.

The protein belongs to the COQ7 family. The cofactor is Fe cation.

The protein localises to the cell membrane. The catalysed reaction is a 5-methoxy-2-methyl-3-(all-trans-polyprenyl)benzene-1,4-diol + AH2 + O2 = a 3-demethylubiquinol + A + H2O. Its pathway is cofactor biosynthesis; ubiquinone biosynthesis. In terms of biological role, catalyzes the hydroxylation of 2-nonaprenyl-3-methyl-6-methoxy-1,4-benzoquinol during ubiquinone biosynthesis. This chain is 3-demethoxyubiquinol 3-hydroxylase, found in Albidiferax ferrireducens (strain ATCC BAA-621 / DSM 15236 / T118) (Rhodoferax ferrireducens).